Here is a 487-residue protein sequence, read N- to C-terminus: Gasdermin-D (487 aa).

Tyrosine 38 is subject to Phosphotyrosine. An S-(2-succinyl)cysteine mark is found at cysteine 39, cysteine 57, and cysteine 77. The next 2 beta stranded transmembrane spans lie at 92–98 (QGRVMLS) and 104–109 (KISGGA). Residue cysteine 122 is modified to S-(2-succinyl)cysteine. 2 consecutive transmembrane segments (beta stranded) span residues 181 to 187 (GSGQFTL) and 192 to 198 (CLKGEGK). S-(2-succinyl)cysteine occurs at positions 192 and 265. Residue cysteine 192 is the site of S-palmitoyl cysteine attachment. Residues 278–298 (IDEEELIEAADFQGLYAEVKA) are linker helix loop. Residues cysteine 299, cysteine 434, and cysteine 487 each carry the S-(2-succinyl)cysteine modification.

The protein belongs to the gasdermin family. In terms of assembly, homooligomer; homooligomeric ring-shaped pore complex containing 27-28 subunits when inserted in the membrane. Homooligomerization is promoted by the mTORC1 complex in macrophages. In response to a canonical inflammasome stimulus, such as nigericin, recruited to NLRP3 inflammasone with similar kinetics to that of uncleaved CASP1 precursor. Although this recruitment is also observed in the absence of PYCARD, it is more efficient in its presence. Post-translationally, cleavage at Asp-276 by CASP1 (mature and uncleaved precursor forms), CASP4/CASP11 or CASP8 relieves autoinhibition and is sufficient to initiate pyroptosis. Cleavage by CASP1 and CASP4/CASP11 is not strictly dependent on the consensus cleavage site on GSDMD but depends on an exosite interface on CASP1 that recognizes and binds the Gasdermin-D, C-terminal (GSDMD-CT) part. Cleavage by CASP8 takes place following inactivation of MAP3K7/TAK1 by Yersinia toxin YopJ. Cleavage at Asp-88 by CASP3 or CASP7 inactivates the ability to mediate pyroptosis, but generates the Gasdermin-D, p13 chain, which translocates to the nucleus and acts as a transcription regulator. Cleavage by papain allergen generates the Gasdermin-D, p40 chain. In terms of processing, palmitoylated at Cys-192 by ZDHHC5 and ZDHHC9 in response to microbial infection and danger signals. May also be palmitoylated by ZDHHC7. Palmitoylation takes place before cleavage by caspases (CASP1, CASP4, CASP5 or CASP8) and is required for membrane translocation and pore formation. Depalmitoylated by LYPLA2. Succination of Cys-192 by the Krebs cycle intermediate fumarate, which leads to S-(2-succinyl)cysteine residues, inhibits processing by caspases, and ability to initiate pyroptosis. Succination modification is catalyzed by a non-enzymatic reaction caused by an accumulation of fumarate. Post-translationally, glycosylated: O-GlcNAcylation by OGT leads to reduced cleavage by CASP4 and decreased LPS-induced endothelial cell pyroptosis. In terms of tissue distribution, highly expressed in brain endothelial cells.

The protein localises to the cytoplasm. Its subcellular location is the cytosol. It localises to the inflammasome. The protein resides in the cell membrane. It is found in the secreted. The protein localises to the mitochondrion membrane. Its subcellular location is the nucleus. With respect to regulation, the full-length protein before cleavage is inactive: intramolecular interactions between N- and C-terminal domains mediate autoinhibition in the absence of activation signal. The intrinsic pyroptosis-inducing activity is carried by the released N-terminal moiety (Gasdermin-D, N-terminal) following cleavage by inflammatory caspases CASP1, CASP4/CASP11 or CASP8. Cleavage at Asp-88 by CASP3 or CASP7 inactivates the ability to mediate pyroptosis. Pore formation is specifically inhibited by VHH(GSDMD-1) nanobody, protecting against excessive pyroptosis. Inhibited by small molecule NU6300, which covalently reacts with Cys-191, thereby preventing palmitoylation and pyroptosis. Precursor of a pore-forming protein that plays a key role in host defense against pathogen infection and danger signals. This form constitutes the precursor of the pore-forming protein: upon cleavage, the released N-terminal moiety (Gasdermin-D, N-terminal) binds to membranes and forms pores, triggering pyroptosis. Its function is as follows. Promotes pyroptosis in response to microbial infection and danger signals. Produced by the cleavage of gasdermin-D by inflammatory caspases CASP1 or CASP4/CASP11 in response to canonical, as well as non-canonical (such as cytosolic LPS) inflammasome activators. After cleavage, moves to the plasma membrane where it strongly binds to inner leaflet lipids, including monophosphorylated phosphatidylinositols, such as phosphatidylinositol 4-phosphate, bisphosphorylated phosphatidylinositols, such as phosphatidylinositol (4,5)-bisphosphate, as well as phosphatidylinositol (3,4,5)-bisphosphate, and more weakly to phosphatidic acid and phosphatidylserine. Homooligomerizes within the membrane and forms pores of 10-15 nanometers (nm) of inner diameter, allowing the release of mature interleukin-1 (IL1B and IL18) and triggering pyroptosis. Gasdermin pores also allow the release of mature caspase-7 (CASP7). In some, but not all, cells types, pyroptosis is followed by pyroptotic cell death, which is caused by downstream activation of ninjurin-1 (NINJ1), which mediates membrane rupture (cytolysis). Also forms pores in the mitochondrial membrane, resulting in release of mitochondrial DNA (mtDNA) into the cytosol. Gasdermin-D, N-terminal released from pyroptotic cells into the extracellular milieu rapidly binds to and kills both Gram-negative and Gram-positive bacteria, without harming neighboring mammalian cells, as it does not disrupt the plasma membrane from the outside due to lipid-binding specificity. Under cell culture conditions, also active against intracellular bacteria, such as Listeria monocytogenes. Also active in response to MAP3K7/TAK1 inactivation by Yersinia toxin YopJ, which triggers cleavage by CASP8 and subsequent activation. Required for mucosal tissue defense against enteric pathogens. Activation of the non-canonical inflammasome in brain endothelial cells can lead to excessive pyroptosis, leading to blood-brain barrier breakdown. Strongly binds to bacterial and mitochondrial lipids, including cardiolipin. Does not bind to unphosphorylated phosphatidylinositol, phosphatidylethanolamine nor phosphatidylcholine. Functionally, transcription coactivator produced by the cleavage by CASP3 or CASP7 in the upper small intestine in response to dietary antigens. Required to maintain food tolerance in small intestine: translocates to the nucleus and acts as a coactivator for STAT1 to induce the transcription of CIITA and MHC class II molecules, which in turn induce type 1 regulatory T (Tr1) cells in upper small intestine. In terms of biological role, produced by the cleavage by papain allergen. After cleavage, moves to the plasma membrane and homooligomerizes within the membrane and forms pores of 10-15 nanometers (nm) of inner diameter, allowing the specific release of mature interleukin-33 (IL33), promoting type 2 inflammatory immune response. The polypeptide is Gasdermin-D (Mus musculus (Mouse)).